We begin with the raw amino-acid sequence, 370 residues long: Queuine tRNA-ribosyltransferase (370 aa).

Asp-89 functions as the Proton acceptor in the catalytic mechanism. Residues 89-93, Asp-143, and Gly-214 each bind substrate; that span reads DSGGF. The tract at residues 245-251 is RNA binding; it reads GVGKPED. Asp-264 acts as the Nucleophile in catalysis. The RNA binding; important for wobble base 34 recognition stretch occupies residues 269–273; the sequence is TRNAR. Cys-302, Cys-304, Cys-307, and His-333 together coordinate Zn(2+).

It belongs to the queuine tRNA-ribosyltransferase family. In terms of assembly, homodimer. Within each dimer, one monomer is responsible for RNA recognition and catalysis, while the other monomer binds to the replacement base PreQ1. Zn(2+) is required as a cofactor.

It carries out the reaction 7-aminomethyl-7-carbaguanine + guanosine(34) in tRNA = 7-aminomethyl-7-carbaguanosine(34) in tRNA + guanine. It participates in tRNA modification; tRNA-queuosine biosynthesis. In terms of biological role, catalyzes the base-exchange of a guanine (G) residue with the queuine precursor 7-aminomethyl-7-deazaguanine (PreQ1) at position 34 (anticodon wobble position) in tRNAs with GU(N) anticodons (tRNA-Asp, -Asn, -His and -Tyr). Catalysis occurs through a double-displacement mechanism. The nucleophile active site attacks the C1' of nucleotide 34 to detach the guanine base from the RNA, forming a covalent enzyme-RNA intermediate. The proton acceptor active site deprotonates the incoming PreQ1, allowing a nucleophilic attack on the C1' of the ribose to form the product. After dissociation, two additional enzymatic reactions on the tRNA convert PreQ1 to queuine (Q), resulting in the hypermodified nucleoside queuosine (7-(((4,5-cis-dihydroxy-2-cyclopenten-1-yl)amino)methyl)-7-deazaguanosine). This is Queuine tRNA-ribosyltransferase from Buchnera aphidicola subsp. Acyrthosiphon pisum (strain APS) (Acyrthosiphon pisum symbiotic bacterium).